Consider the following 211-residue polypeptide: Ribonuclease HII (211 aa).

In terms of domain architecture, RNase H type-2 spans 21-211; the sequence is SSIAGLDEAG…APLKSMFDVI (191 aa). Aspartate 27, glutamate 28, and aspartate 122 together coordinate a divalent metal cation.

The protein belongs to the RNase HII family. The cofactor is Mn(2+). Mg(2+) is required as a cofactor.

It is found in the cytoplasm. It carries out the reaction Endonucleolytic cleavage to 5'-phosphomonoester.. In terms of biological role, endonuclease that specifically degrades the RNA of RNA-DNA hybrids. The sequence is that of Ribonuclease HII from Dehalococcoides mccartyi (strain ATCC BAA-2266 / KCTC 15142 / 195) (Dehalococcoides ethenogenes (strain 195)).